The chain runs to 630 residues: tRNA uridine 5-carboxymethylaminomethyl modification enzyme MnmG (630 aa).

FAD is bound at residue 13 to 18 (GGGHAG). Position 273–287 (273–287 (GPRYCPSIEDKIHRF)) interacts with NAD(+).

This sequence belongs to the MnmG family. In terms of assembly, homodimer. Heterotetramer of two MnmE and two MnmG subunits. FAD serves as cofactor.

It localises to the cytoplasm. NAD-binding protein involved in the addition of a carboxymethylaminomethyl (cmnm) group at the wobble position (U34) of certain tRNAs, forming tRNA-cmnm(5)s(2)U34. This chain is tRNA uridine 5-carboxymethylaminomethyl modification enzyme MnmG, found in Pseudomonas putida (strain GB-1).